The following is a 104-amino-acid chain: UPF0125 protein PSPTO_4512 (104 aa).

Belongs to the UPF0125 (RnfH) family.

This chain is UPF0125 protein PSPTO_4512, found in Pseudomonas syringae pv. tomato (strain ATCC BAA-871 / DC3000).